The primary structure comprises 907 residues: Gamma-tubulin complex component 3 (907 aa).

Position 2 is an N-acetylalanine (Ala-2). Ser-113 carries the phosphoserine modification. Residues 210–230 (NQPSSQATTSKGVPSAVSRNM) show a composition bias toward polar residues. The tract at residues 210–241 (NQPSSQATTSKGVPSAVSRNMTRSRREGDTGG) is disordered.

This sequence belongs to the TUBGCP family. In terms of assembly, component of the gamma-tubulin ring complex (gTuRC) consisting of TUBGCP2, TUBGCP3, TUBGCP4, TUBGCP5 and TUBGCP6 and gamma-tubulin TUBG1 or TUBG2. TUBGCP2, TUBGCP3, TUBGCP4, TUBGCP5 and TUBGCP6 assemble in a 5:5:2:1:1 stoichiometry; each is associated with a gamma-tubulin, thereby arranging 14 gamma-tubulins in a helical manner. Gamma-tubulin at the first position is blocked by TUBGCP3 at the last position, allowing 13 protafilaments to grow into a microtubule. The gTuRC (via TUBGCP3 and TUBGCP6) interacts with ACTB and MZT1; the interactions form a luminal bridge that stabilizes the initial structure during complex assembly. The gTuRC (via TUBGCP2) interacts with MZT2A/MZT2B and CDK5RAP2 (via CM1 motif); the interactions play a role in gTuRC activation. Interacts with NIN (via N-terminus); the interaction may promote recruitment of the gamma-tubulin ring complex to the centrosome. As to expression, ubiquitously expressed.

The protein resides in the cytoplasm. It localises to the cytoskeleton. It is found in the microtubule organizing center. The protein localises to the centrosome. In terms of biological role, component of the gamma-tubulin ring complex (gTuRC) which mediates microtubule nucleation. The gTuRC regulates the minus-end nucleation of alpha-beta tubulin heterodimers that grow into microtubule protafilaments, a critical step in centrosome duplication and spindle formation. The chain is Gamma-tubulin complex component 3 (TUBGCP3) from Homo sapiens (Human).